Here is a 313-residue protein sequence, read N- to C-terminus: Methionyl-tRNA formyltransferase (313 aa).

The disordered stretch occupies residues 32–51 (QPDRRKGRGKELQPPPAKRK). 109–112 (SLLP) provides a ligand contact to (6S)-5,6,7,8-tetrahydrofolate.

Belongs to the Fmt family.

It carries out the reaction L-methionyl-tRNA(fMet) + (6R)-10-formyltetrahydrofolate = N-formyl-L-methionyl-tRNA(fMet) + (6S)-5,6,7,8-tetrahydrofolate + H(+). In terms of biological role, attaches a formyl group to the free amino group of methionyl-tRNA(fMet). The formyl group appears to play a dual role in the initiator identity of N-formylmethionyl-tRNA by promoting its recognition by IF2 and preventing the misappropriation of this tRNA by the elongation apparatus. The polypeptide is Methionyl-tRNA formyltransferase (Natranaerobius thermophilus (strain ATCC BAA-1301 / DSM 18059 / JW/NM-WN-LF)).